The following is a 255-amino-acid chain: DNA repair protein RecO (255 aa).

This sequence belongs to the RecO family.

Involved in DNA repair and RecF pathway recombination. The sequence is that of DNA repair protein RecO from Listeria monocytogenes serotype 4a (strain HCC23).